The following is a 217-amino-acid chain: MATGSRTSLLLAFGLLCLPWLQEGSAFPTIPLSRLFDNAMLRAHRLHQLAFDTYQEFEEAYIPKEQKYSFLQNPQTSLCFSESIPTPSNREETQQKSNLELLRISLLLIQSWLEPVQFLRSVFANSLVYGASDSNVYDLLKDLEEGIQTLMGRLEDGSPRTGQIFKQTYSKFDTNSHNDDALLKNYGLLYCFRKDMDKVETFLRIVQCRSVEGSCGF.

The N-terminal stretch at 1–26 (MATGSRTSLLLAFGLLCLPWLQEGSA) is a signal peptide. His-44 lines the Zn(2+) pocket. A disulfide bridge links Cys-79 with Cys-191. Ser-132 bears the Phosphoserine mark. At Gln-163 the chain carries Deamidated glutamine; by deterioration. Residue Ser-176 is modified to Phosphoserine. Asn-178 bears the Deamidated asparagine; by deterioration mark. Residue Glu-200 coordinates Zn(2+). Cys-208 and Cys-215 are oxidised to a cystine.

The protein belongs to the somatotropin/prolactin family. As to quaternary structure, monomer, dimer, trimer, tetramer and pentamer, disulfide-linked or non-covalently associated, in homomeric and heteromeric combinations. Can also form a complex either with GHBP or with the alpha2-macroglobulin complex.

Its subcellular location is the secreted. In terms of biological role, plays an important role in growth control. Its major role in stimulating body growth is to stimulate the liver and other tissues to secrete IGF1. It stimulates both the differentiation and proliferation of myoblasts. It also stimulates amino acid uptake and protein synthesis in muscle and other tissues. This Homo sapiens (Human) protein is Somatotropin (GH1).